The chain runs to 66 residues: Xenoxin-2 (66 aa).

Disulfide bonds link C3–C24, C17–C37, C43–C58, and C59–C64.

As to expression, expressed by the skin dorsal glands.

It is found in the secreted. Its function is as follows. Lacks alpha-neurotoxic activity, has apparently no antibacterial activity, nor anti-coagulant potency. The protein is Xenoxin-2 of Xenopus laevis (African clawed frog).